The following is an 86-amino-acid chain: Large ribosomal subunit protein bL27 (86 aa).

The disordered stretch occupies residues Met-1–Lys-24.

The protein belongs to the bacterial ribosomal protein bL27 family.

In Magnetococcus marinus (strain ATCC BAA-1437 / JCM 17883 / MC-1), this protein is Large ribosomal subunit protein bL27.